A 381-amino-acid polypeptide reads, in one-letter code: Adaptive-response sensory kinase SasA (381 aa).

The region spanning 154-367 (MVAHELRTPL…CFYFTVPVWD (214 aa)) is the Histidine kinase domain. His157 bears the Phosphohistidine; by autocatalysis mark.

In terms of assembly, homooligomerizes. Interacts with KaiC. Participates in the KaiBC complex, whose core is composed of a KaiC homohexamer and 6 KaiB.

The enzyme catalyses ATP + protein L-histidine = ADP + protein N-phospho-L-histidine.. Functionally, member of the two-component regulatory system SasA/RpaA involved in genome-wide circadian gene expression. One of several clock output pathways. Participates in the Kai clock protein complex, the main circadian regulator in cyanobacteria, via its interaction with KaiC. KaiC enhances the autophosphorylation activity of SasA, which then transfers its phosphate group to RpaA to activate it. In addition to its output function, recruits fold-shifted KaiB (KaiB(fs)) to KaiC to cooperatively form the KaiB(6):KaiC(6) complex (independent of SasA kinase activity). Required for robustness of the circadian rhythm of gene expression and is involved in clock output, also required for adaptation to light/dark cycles. The polypeptide is Adaptive-response sensory kinase SasA (Prochlorococcus marinus (strain SARG / CCMP1375 / SS120)).